The chain runs to 270 residues: Glutamate racemase (270 aa).

Substrate is bound by residues 7–8 (DS) and 39–40 (YG). Cys70 serves as the catalytic Proton donor/acceptor. Residue 71–72 (NT) coordinates substrate. The active-site Proton donor/acceptor is the Cys194. 195–196 (TH) serves as a coordination point for substrate.

The protein belongs to the aspartate/glutamate racemases family.

It catalyses the reaction L-glutamate = D-glutamate. It functions in the pathway cell wall biogenesis; peptidoglycan biosynthesis. Its function is as follows. Provides the (R)-glutamate required for cell wall biosynthesis. The sequence is that of Glutamate racemase from Cereibacter sphaeroides (strain ATCC 17023 / DSM 158 / JCM 6121 / CCUG 31486 / LMG 2827 / NBRC 12203 / NCIMB 8253 / ATH 2.4.1.) (Rhodobacter sphaeroides).